The primary structure comprises 191 residues: UPF0301 protein Bphy_2327 (191 aa).

Belongs to the UPF0301 (AlgH) family.

In Paraburkholderia phymatum (strain DSM 17167 / CIP 108236 / LMG 21445 / STM815) (Burkholderia phymatum), this protein is UPF0301 protein Bphy_2327.